The following is a 1002-amino-acid chain: Chitin synthase II (1002 aa).

2 disordered regions span residues 1–165 and 178–209; these read MDRP…GRTS and LDGSDDVFGPETDLSDSRPLPTHRDSFMSGSQ. The segment covering 63-78 has biased composition (low complexity); that stretch reads SYQPSVVSSHSRSASV. Residue N123 is glycosylated (N-linked (GlcNAc...) asparagine). An N-linked (GlcNAc...) asparagine glycan is attached at N336. 8 consecutive transmembrane segments (helical) span residues 627-647, 669-689, 704-724, 740-760, 780-800, 808-828, 906-926, and 940-960; these read WLNGAFFAAVYSLVQFRQILA, LLFTYFSLANFYLTFYFVAGG, SVIFTILRYTCVLLIATQFIL, SMIIYGVIMTYTSFACIYIVV, LIVSMASTIGLYFVMSFLYLE, SLQYFLLLPSYICTLQVYAFC, YMVVTWMIANGILAMAVSEIY, and ILWAVASLAIFRALGSTTFAI.

The protein belongs to the chitin synthase family. Class II subfamily. As to expression, expressed in hyphal bodies.

The protein localises to the cell membrane. The catalysed reaction is [(1-&gt;4)-N-acetyl-beta-D-glucosaminyl](n) + UDP-N-acetyl-alpha-D-glucosamine = [(1-&gt;4)-N-acetyl-beta-D-glucosaminyl](n+1) + UDP + H(+). Functionally, polymerizes chitin, a structural polymer of the cell wall and septum, by transferring the sugar moiety of UDP-GlcNAc to the non-reducing end of the growing chitin polymer. Contributes to the production of conidia and the ability of fungal conidia to germinate. Involved in fungal stress tolerances. In Metarhizium acridum (strain CQMa 102), this protein is Chitin synthase II.